Here is a 749-residue protein sequence, read N- to C-terminus: Protein SWAP (749 aa).

The interval 8 to 124 (SNVHVQEYKD…RNDQRNAIGF (117 aa)) is dry CEEERYL. Residues 105–118 (EQEKEEEEKRRNDQ) show a composition bias toward basic and acidic residues. The interval 105-149 (EQEKEEEEKRRNDQRNAIGFDYGTGKVKARESDSEDEPFEPPEGI) is disordered. One copy of the SURP motif 1 repeat lies at 166-209 (IIEKTASFIVANGTQMEIVIKAKQRNNAEQFGFLEFDHRLNPFY). The interval 256 to 310 (HGSDSEDSDSDYELHPSLLSGGAKRPVTPEKPGAIGPRKKPVEPEKPPDFTLKPV) is disordered. An SURP motif 2 repeat occupies 391–431 (ILNSYAEHVAQRGLEAEASLAAREDLQLHFMEPKSPYYSYY). Residues 458–478 (PAPPSAVSSPGPSSLMSLNLS) are compositionally biased toward low complexity. 3 disordered regions span residues 458–498 (PAPP…SSRL), 537–592 (LRND…QVDR), and 608–749 (KAKK…DRRR). Basic and acidic residues predominate over residues 538–552 (RNDEPRDESSFRFDP). The segment covering 560 to 569 (PSDTTANFSD) has biased composition (polar residues). Over residues 574–583 (FPPPTPPVIP) the composition is skewed to pro residues. 2 stretches are compositionally biased toward basic and acidic residues: residues 608–659 (KAKK…RSLD) and 679–689 (EEMKRTDEDRE). Basic residues-rich tracts occupy residues 690-704 (RKRH…RRSR) and 714-749 (EHKK…DRRR).

Its function is as follows. It is a regulator of pre-mRNA splicing (and, possibly, of other RNA processing events). It may regulate its own expression at the level of RNA processing. This Caenorhabditis elegans protein is Protein SWAP (swp-1).